A 40-amino-acid polypeptide reads, in one-letter code: Photosystem II reaction center protein Y (40 aa).

A helical transmembrane segment spans residues 5–23 (LVLVASPILLAVGWAGFNI).

It belongs to the PsbY family. In terms of assembly, PSII is composed of 1 copy each of membrane proteins PsbA, PsbB, PsbC, PsbD, PsbE, PsbF, PsbH, PsbI, PsbJ, PsbK, PsbL, PsbM, PsbT, PsbX, PsbY, PsbZ, Psb30/Ycf12, peripheral proteins PsbO, CyanoQ (PsbQ), PsbU, PsbV and a large number of cofactors. It forms dimeric complexes.

The protein resides in the cellular thylakoid membrane. Loosely associated component of the core of photosystem II (PSII), it is not always seen in crystals. PSII is a light-driven water plastoquinone oxidoreductase, using light energy to abstract electrons from H(2)O, generating a proton gradient subsequently used for ATP formation. This chain is Photosystem II reaction center protein Y, found in Synechococcus sp. (strain RCC307).